The sequence spans 358 residues: C-X-C chemokine receptor type 2 (358 aa).

The Extracellular segment spans residues 1 to 46 (MQEFTWENYSYEDFFGDFSNYSYSTDLPPTLLDSAPCRSESLETNS). N-linked (GlcNAc...) asparagine glycans are attached at residues N8 and N20. A helical transmembrane segment spans residues 47 to 73 (YVVLITYILVFLLSLLGNSLVMLVILY). The Cytoplasmic portion of the chain corresponds to 74–82 (SRSTCSVTD). Residues 83-103 (VYLLNLAIADLLFATTLPIWA) form a helical membrane-spanning segment. The Extracellular segment spans residues 104–118 (ASKVHGWTFGTPLCK). Cysteines 117 and 194 form a disulfide. The helical transmembrane segment at 119–140 (VVSLVKEVNFYSGILLLACISV) threads the bilayer. The Cytoplasmic segment spans residues 141 to 161 (DRYLAIVHATRTMIQKRHLVK). Residues 162 to 181 (FICLSMWGVSLILSLPILLF) form a helical membrane-spanning segment. Topologically, residues 182-206 (RNAIFPPNSSPVCYEDMGNSTAKWR) are extracellular. A helical membrane pass occupies residues 207 to 229 (MVLRILPQTFGFILPLLVMLFCY). Residues 230-249 (VFTLRTLFQAHMGQKHRAMR) lie on the Cytoplasmic side of the membrane. The helical transmembrane segment at 250-271 (VIFAVVLIFLLCWLPYNLVLLT) threads the bilayer. The Extracellular segment spans residues 272–292 (DTLMRTHVIQETCERRNDIDR). Residues 293-313 (ALDATEILGFLHSCLNPIIYA) traverse the membrane as a helical segment. Topologically, residues 314–358 (FIGQKFRYGLLKILAAHGLISKEFLAKESRPSFVASSSGNTSTTL) are cytoplasmic.

This sequence belongs to the G-protein coupled receptor 1 family. In terms of assembly, interacts with IL8. Interacts with GNAI2. Post-translationally, phosphorylated upon ligand binding; which is required for desensitization. In terms of tissue distribution, expressed preferentially in neutrophils.

It is found in the cell membrane. In terms of biological role, receptor for interleukin-8 which is a powerful neutrophil chemotactic factor. Binding of IL-8 to the receptor causes activation of neutrophils. This response is mediated via a G-protein that activates a phosphatidylinositol-calcium second messenger system. Binds to IL-8 with high affinity. Also binds with high affinity to CXCL3, GRO/MGSA and NAP-2. This Oryctolagus cuniculus (Rabbit) protein is C-X-C chemokine receptor type 2 (CXCR2).